The primary structure comprises 353 residues: Photosystem II D2 protein (353 aa).

Position 2 is an N-acetylthreonine (T2). T2 carries the post-translational modification Phosphothreonine. The helical transmembrane segment at 41–61 threads the bilayer; it reads CAYFALGGWFTGTTFVTSWYT. H118 serves as a coordination point for chlorophyll a. The helical transmembrane segment at 125 to 141 threads the bilayer; the sequence is GFMLRQFELARSVQLRP. Pheophytin a-binding residues include Q130 and N143. Residues 153-166 traverse the membrane as a helical segment; sequence VFVSVFLIYPLGQS. H198 contributes to the chlorophyll a binding site. Residues 208–228 form a helical membrane-spanning segment; that stretch reads AALLCAIHGATVENTLFEDGD. 2 residues coordinate a plastoquinone: H215 and F262. Residue H215 participates in Fe cation binding. H269 lines the Fe cation pocket. Residues 279–295 form a helical membrane-spanning segment; the sequence is GLWMSALGVVGLALNLR.

It belongs to the reaction center PufL/M/PsbA/D family. In terms of assembly, PSII is composed of 1 copy each of membrane proteins PsbA, PsbB, PsbC, PsbD, PsbE, PsbF, PsbH, PsbI, PsbJ, PsbK, PsbL, PsbM, PsbT, PsbX, PsbY, PsbZ, Psb30/Ycf12, at least 3 peripheral proteins of the oxygen-evolving complex and a large number of cofactors. It forms dimeric complexes. The D1/D2 heterodimer binds P680, chlorophylls that are the primary electron donor of PSII, and subsequent electron acceptors. It shares a non-heme iron and each subunit binds pheophytin, quinone, additional chlorophylls, carotenoids and lipids. There is also a Cl(-1) ion associated with D1 and D2, which is required for oxygen evolution. The PSII complex binds additional chlorophylls, carotenoids and specific lipids. is required as a cofactor.

The protein resides in the plastid. Its subcellular location is the chloroplast thylakoid membrane. It catalyses the reaction 2 a plastoquinone + 4 hnu + 2 H2O = 2 a plastoquinol + O2. Its function is as follows. Photosystem II (PSII) is a light-driven water:plastoquinone oxidoreductase that uses light energy to abstract electrons from H(2)O, generating O(2) and a proton gradient subsequently used for ATP formation. It consists of a core antenna complex that captures photons, and an electron transfer chain that converts photonic excitation into a charge separation. The D1/D2 (PsbA/PsbD) reaction center heterodimer binds P680, the primary electron donor of PSII as well as several subsequent electron acceptors. D2 is needed for assembly of a stable PSII complex. In Ceratophyllum demersum (Rigid hornwort), this protein is Photosystem II D2 protein.